The sequence spans 104 residues: L-rhamnose mutarotase (104 aa).

Position 18 (tyrosine 18) interacts with substrate. Histidine 22 acts as the Proton donor in catalysis. Substrate-binding positions include tyrosine 41 and 76–77; that span reads WW.

This sequence belongs to the rhamnose mutarotase family. In terms of assembly, homodimer.

The protein localises to the cytoplasm. It carries out the reaction alpha-L-rhamnose = beta-L-rhamnose. The protein operates within carbohydrate metabolism; L-rhamnose metabolism. Its function is as follows. Involved in the anomeric conversion of L-rhamnose. The sequence is that of L-rhamnose mutarotase from Clostridium beijerinckii (strain ATCC 51743 / NCIMB 8052) (Clostridium acetobutylicum).